The following is a 250-amino-acid chain: MFSLPLSLPLCEDTAFLPSKCCSSHKTIKQARTLIMIFLASGTHFQTMLKSKLNVLTLKKEPLPAVIFHEPEAIELCTTTPLMKTRTHSGCKVTYLGKVSTTGMQFLSGCTEKPVIELWKKHTLAREDVFPANALLEIRPFQVWLHHLDHKGEATVHMDTFQVARIAYCTADHNVSPNIFAWVYREINDDLSYQMDCHAVECESKLEAKKLAHAMMEAFRKTFHSMKSDGRIHSNSSSEEVSQELESDDG.

One can recognise a PID domain in the interval 93-250 (VTYLGKVSTT…VSQELESDDG (158 aa)). A disordered region spans residues 229 to 250 (DGRIHSNSSSEEVSQELESDDG). 2 positions are modified to phosphoserine: S236 and S247. A compositionally biased stretch (acidic residues) spans 241–250 (VSQELESDDG).

Found in a complex with PID1/PCLI1, LRP1 and CUBNI. Interacts with LRP1 and CUBN. In terms of tissue distribution, expressed in subcutaneous fat, heart, skeletal muscle, brain, colon, thymus, spleen, kidney, liver, small intestine, placenta, lung and peripheral blood leukocyte.

It is found in the cytoplasm. Its function is as follows. Increases proliferation of preadipocytes without affecting adipocytic differentiation. The protein is PTB-containing, cubilin and LRP1-interacting protein (PID1) of Homo sapiens (Human).